Here is an 80-residue protein sequence, read N- to C-terminus: Conotoxin Bt6.5 (80 aa).

The first 22 residues, 1 to 22, serve as a signal peptide directing secretion; it reads MKLTCVLIIAVLFLTACQLATA. Positions 23-45 are excised as a propeptide; it reads KTYSTGRQKHRALRSTDKNIKLS. 3 disulfides stabilise this stretch: cysteine 48–cysteine 62, cysteine 55–cysteine 66, and cysteine 61–cysteine 73.

It belongs to the conotoxin O1 superfamily. As to expression, expressed by the venom duct.

It is found in the secreted. Functionally, when injected intracranially in mice, induces a series of symptoms such as quivering, climbing, scratching, barrel rolling and paralysis of limbs. Unexpectedly, no effect is observed on ionic currents when tested on locust DUM neuron. This Conus betulinus (Beech cone) protein is Conotoxin Bt6.5.